The chain runs to 242 residues: Endoglucanase (242 aa).

A signal peptide spans 1–21; sequence MQVIVLPLVFLATFATSGSLA. D47 functions as the Nucleophile in the catalytic mechanism. N-linked (GlcNAc...) asparagine glycosylation is found at N79, N103, and N217.

This sequence belongs to the glycosyl hydrolase 45 (cellulase K) family. As to expression, expressed in larval carcasses and gut, and adult gut.

It localises to the secreted. It catalyses the reaction Endohydrolysis of (1-&gt;4)-beta-D-glucosidic linkages in cellulose, lichenin and cereal beta-D-glucans.. The polypeptide is Endoglucanase (Phaedon cochleariae (Mustard beetle)).